Consider the following 356-residue polypeptide: Myricetin 7/4'-O-methyltransferase 2 (356 aa).

Position 222 (Asp222) interacts with S-adenosyl-L-methionine. The active-site Proton acceptor is the His260.

Belongs to the class I-like SAM-binding methyltransferase superfamily. Cation-independent O-methyltransferase family. In terms of assembly, homodimer.

It carries out the reaction quercetin + S-adenosyl-L-methionine = rhamnetin + S-adenosyl-L-homocysteine + H(+). The catalysed reaction is kaempferol + S-adenosyl-L-methionine = kaempferide + S-adenosyl-L-homocysteine + H(+). It catalyses the reaction myricetin + S-adenosyl-L-methionine = 7-O-methylmyricetin + S-adenosyl-L-homocysteine + H(+). The enzyme catalyses kaempferide + S-adenosyl-L-methionine = 7,4'-O-dimethylkaempferol + S-adenosyl-L-homocysteine + H(+). It carries out the reaction isorhamnetin + S-adenosyl-L-methionine = 3',4'-O-dimethylquercetin + S-adenosyl-L-homocysteine + 2 H(+). The catalysed reaction is 3',4',5,7-tetrahydroxy-3-methoxyflavone + S-adenosyl-L-methionine = 3',4',5-trihydroxy-3,7-dimethoxyflavone + S-adenosyl-L-homocysteine + H(+). It catalyses the reaction rhamnetin + S-adenosyl-L-methionine = 7,4'-O-dimethylquercetin + S-adenosyl-L-homocysteine + H(+). The enzyme catalyses syringetin + S-adenosyl-L-methionine = 7,3',5'-O-trimethylmyricetin + S-adenosyl-L-homocysteine + H(+). It carries out the reaction 3',4',5'-O-trimethylmyricetin + S-adenosyl-L-methionine = 7,3',4',5'-O-tetramethylmyricetin + S-adenosyl-L-homocysteine. Its pathway is flavonoid metabolism. Its function is as follows. Flavonoid 7/4'-O-methyltransferase involved in the biosynthesis of polymethoxylated flavonoids natural products such as myricetin derivatives, aroma compounds possessing antioxidant properties and exhibiting pharmacological activities such as anti-carcinogen, anti-viral, anti-thrombotic, anti-diabetic, anti-atherosclerotic, and anti-inflammatory effects. Catalyzes S-adenosylmethionine-dependent regioselective 7/4'-O-methylation of flavonoids; active on various hydroxylated flavonoid substrates. The polypeptide is Myricetin 7/4'-O-methyltransferase 2 (Solanum lycopersicum (Tomato)).